The sequence spans 333 residues: GTPase Obg (333 aa).

The Obg domain maps to 1-158 (MFIDSAKIYV…RNIDLELKLL (158 aa)). Positions 121-143 (HGGKGNQHFATPTNRAPRYSEPA) are disordered. One can recognise an OBG-type G domain in the interval 159–323 (ADIGLVGFPN…LKDVLWRIIQ (165 aa)). GTP contacts are provided by residues 165–172 (GFPNAGKS), 190–194 (FTTLE), 212–215 (DIPG), 279–282 (SKMD), and 304–306 (SSV). Mg(2+) contacts are provided by S172 and T192.

Belongs to the TRAFAC class OBG-HflX-like GTPase superfamily. OBG GTPase family. As to quaternary structure, monomer. Mg(2+) serves as cofactor.

The protein resides in the cytoplasm. In terms of biological role, an essential GTPase which binds GTP, GDP and possibly (p)ppGpp with moderate affinity, with high nucleotide exchange rates and a fairly low GTP hydrolysis rate. Plays a role in control of the cell cycle, stress response, ribosome biogenesis and in those bacteria that undergo differentiation, in morphogenesis control. In Chloroherpeton thalassium (strain ATCC 35110 / GB-78), this protein is GTPase Obg.